Consider the following 286-residue polypeptide: Light-independent protochlorophyllide reductase iron-sulfur ATP-binding protein (286 aa).

Residues 10–15 (GIGKST) and Lys-39 contribute to the ATP site. Ser-14 provides a ligand contact to Mg(2+). Cys-95 and Cys-129 together coordinate [4Fe-4S] cluster. 180–181 (NR) is an ATP binding site.

The protein belongs to the NifH/BchL/ChlL family. Homodimer. Protochlorophyllide reductase is composed of three subunits; ChlL, ChlN and ChlB. [4Fe-4S] cluster serves as cofactor.

It carries out the reaction chlorophyllide a + oxidized 2[4Fe-4S]-[ferredoxin] + 2 ADP + 2 phosphate = protochlorophyllide a + reduced 2[4Fe-4S]-[ferredoxin] + 2 ATP + 2 H2O. The protein operates within porphyrin-containing compound metabolism; chlorophyll biosynthesis (light-independent). Its function is as follows. Component of the dark-operative protochlorophyllide reductase (DPOR) that uses Mg-ATP and reduced ferredoxin to reduce ring D of protochlorophyllide (Pchlide) to form chlorophyllide a (Chlide). This reaction is light-independent. The L component serves as a unique electron donor to the NB-component of the complex, and binds Mg-ATP. In Leptolyngbya boryana (Plectonema boryanum), this protein is Light-independent protochlorophyllide reductase iron-sulfur ATP-binding protein.